The primary structure comprises 224 residues: Rhodanese-like domain-containing protein 14, chloroplastic (224 aa).

Residues 1 to 48 (MASLTSIATPYPSSSQALRLKSSGNTLFSAGVRSAAMVSGHKTLKIQC) constitute a chloroplast transit peptide. Residues 87 to 220 (KENNFVILDV…WGKEGLPVET (134 aa)) enclose the Rhodanese domain. C166 acts as the Cysteine persulfide intermediate in catalysis.

Its subcellular location is the plastid. It localises to the chloroplast. This Arabidopsis thaliana (Mouse-ear cress) protein is Rhodanese-like domain-containing protein 14, chloroplastic.